A 280-amino-acid chain; its full sequence is ATP synthase gamma chain (280 aa).

Belongs to the ATPase gamma chain family. In terms of assembly, F-type ATPases have 2 components, CF(1) - the catalytic core - and CF(0) - the membrane proton channel. CF(1) has five subunits: alpha(3), beta(3), gamma(1), delta(1), epsilon(1). CF(0) has three main subunits: a, b and c.

It is found in the cell membrane. In terms of biological role, produces ATP from ADP in the presence of a proton gradient across the membrane. The gamma chain is believed to be important in regulating ATPase activity and the flow of protons through the CF(0) complex. The protein is ATP synthase gamma chain of Mycoplasma capricolum subsp. capricolum (strain California kid / ATCC 27343 / NCTC 10154).